A 352-amino-acid chain; its full sequence is Quinolinate synthase (352 aa).

Iminosuccinate-binding residues include histidine 48 and serine 69. Cysteine 114 provides a ligand contact to [4Fe-4S] cluster. Residues 140–142 and serine 157 each bind iminosuccinate; that span reads YAN. Residue cysteine 201 participates in [4Fe-4S] cluster binding. Iminosuccinate is bound by residues 227–229 and threonine 244; that span reads HPE. [4Fe-4S] cluster is bound at residue cysteine 298.

This sequence belongs to the quinolinate synthase family. Type 1 subfamily. [4Fe-4S] cluster serves as cofactor.

It localises to the cytoplasm. The enzyme catalyses iminosuccinate + dihydroxyacetone phosphate = quinolinate + phosphate + 2 H2O + H(+). It functions in the pathway cofactor biosynthesis; NAD(+) biosynthesis; quinolinate from iminoaspartate: step 1/1. Functionally, catalyzes the condensation of iminoaspartate with dihydroxyacetone phosphate to form quinolinate. This is Quinolinate synthase from Pseudomonas fluorescens (strain Pf0-1).